A 313-amino-acid chain; its full sequence is Protein FixB (313 aa).

255-283 contacts FAD; that stretch reads LYLAVGISGQIQHMVGANASQTIFAINKD.

Belongs to the ETF alpha-subunit/FixB family. As to quaternary structure, heterodimer of FixA and FixB.

Its pathway is amine and polyamine metabolism; carnitine metabolism. Required for anaerobic carnitine reduction. May bring reductant to CaiA. This chain is Protein FixB, found in Escherichia coli (strain 55989 / EAEC).